A 361-amino-acid polypeptide reads, in one-letter code: Aromatic amino acid aminotransferase (361 aa).

Lys-221 bears the N6-(pyridoxal phosphate)lysine mark.

Belongs to the class-II pyridoxal-phosphate-dependent aminotransferase family. Homodimer. Pyridoxal 5'-phosphate serves as cofactor.

It catalyses the reaction an aromatic L-alpha-amino acid + 2-oxoglutarate = an aromatic oxo-acid + L-glutamate. In terms of biological role, aminotransferase that catalyzes the conversion of aromatic amino acids and 2-oxoglutarate into corresponding aromatic oxo acids and L-glutamate. This Mycobacterium ulcerans (strain Agy99) protein is Aromatic amino acid aminotransferase.